We begin with the raw amino-acid sequence, 838 residues long: Xyloglucanase (838 aa).

Residues 1 to 19 (MKVSRVLALVLGAVIPAHA) form the signal peptide. Residue D53 is the Nucleophile of the active site. N232 and N436 each carry an N-linked (GlcNAc...) asparagine glycan. The active-site Proton donor is the D469. Residues 750 to 801 (GTGGTSSSTKQSSSSTSSASSSTTLRSSVVSTTRASTVTSSRTSSAAGPTGS) are disordered. Positions 754–797 (TSSSTKQSSSSTSSASSSTTLRSSVVSTTRASTVTSSRTSSAAG) are enriched in low complexity. One can recognise a CBM1 domain in the interval 802–838 (GVAGHYAQCGGIGWTGPTQCVAPYVCQKQNDYYYQCV).

This sequence belongs to the glycosyl hydrolase 74 family.

It catalyses the reaction Hydrolysis of (1-&gt;4)-D-glucosidic linkages in xyloglucans so as to successively remove oligosaccharides from the newly-formed chain end after endo-initiation on a polymer molecule.. Functionally, hydrolyzes the glucosidic bonds of unbranched Glc residues in tamarind seed xyloglucan, producing XXXG, XLXG, XXLG and XLLG. Has a low activity against beta-glucan and carboxymethylcellulose. Not active against Avicel, laminarin, xylan, galactomannan, linear and branched arabinans, galactan, polygalacturonic acid, starch, beta-D-Glcp, beta-D-cellobiose, beta-D-Galp, beta-D-Xylp, alpha-D-Xylp, alpha-L-Araf and alpha-L-Arap. The protein is Xyloglucanase of Hypocrea jecorina (strain QM6a) (Trichoderma reesei).